The chain runs to 170 residues: uncharacterized protein (170 aa).

A helical transmembrane segment spans residues 7-27 (LVELLIGLAIISIALNFAVPL).

It localises to the membrane. This is an uncharacterized protein from Haemophilus influenzae (strain ATCC 51907 / DSM 11121 / KW20 / Rd).